Consider the following 251-residue polypeptide: Orotidine 5'-phosphate decarboxylase (251 aa).

Residues aspartate 19, lysine 42, 69–78, threonine 133, arginine 194, glutamine 204, glycine 224, and arginine 225 each bind substrate; that span reads DLKFHDIPNT. The Proton donor role is filled by lysine 71.

The protein belongs to the OMP decarboxylase family. Type 1 subfamily. As to quaternary structure, homodimer.

The enzyme catalyses orotidine 5'-phosphate + H(+) = UMP + CO2. Its pathway is pyrimidine metabolism; UMP biosynthesis via de novo pathway; UMP from orotate: step 2/2. Functionally, catalyzes the decarboxylation of orotidine 5'-monophosphate (OMP) to uridine 5'-monophosphate (UMP). The protein is Orotidine 5'-phosphate decarboxylase of Syntrophus aciditrophicus (strain SB).